We begin with the raw amino-acid sequence, 361 residues long: RLA class I histocompatibility antigen, alpha chain 11/11 (361 aa).

The first 24 residues, 1 to 24, serve as a signal peptide directing secretion; sequence MGSMAPRTLLLLLAGALTLKDTQA. The segment at 25–114 is alpha-1; sequence GSHSMRYFYT…ALRYYNQSAA (90 aa). Residues 25–308 lie on the Extracellular side of the membrane; sequence GSHSMRYFYT…EPPAQPTALI (284 aa). A glycan (N-linked (GlcNAc...) asparagine) is linked at asparagine 110. Residues 115 to 206 form an alpha-2 region; sequence GSHTFQTMFG…EMGKETLQRA (92 aa). 2 cysteine pairs are disulfide-bonded: cysteine 125–cysteine 188 and cysteine 227–cysteine 283. Residues 207–298 are alpha-3; the sequence is DPPKAHVTHH…GLPEPLTLTW (92 aa). The region spanning 209–297 is the Ig-like C1-type domain; that stretch reads PKAHVTHHPA…EGLPEPLTLT (89 aa). A connecting peptide region spans residues 299–308; it reads EPPAQPTALI. The chain crosses the membrane as a helical span at residues 309–329; that stretch reads VGIVAGVLGVLLILGAVVAVV. At 330–361 the chain is on the cytoplasmic side; sequence RRKKHSSDGKGGRYTPAAGGHRDQGSDDSLMP. The disordered stretch occupies residues 335–361; it reads SSDGKGGRYTPAAGGHRDQGSDDSLMP. A phosphoserine mark is found at serine 355 and serine 358.

This sequence belongs to the MHC class I family. As to quaternary structure, heterodimer of an alpha chain and a beta chain (beta-2-microglobulin).

The protein resides in the membrane. Its function is as follows. Involved in the presentation of foreign antigens to the immune system. The chain is RLA class I histocompatibility antigen, alpha chain 11/11 from Oryctolagus cuniculus (Rabbit).